A 264-amino-acid polypeptide reads, in one-letter code: Phosphonoacetaldehyde hydrolase (264 aa).

D9 (nucleophile) is an active-site residue. Residues D9 and A11 each coordinate Mg(2+). The active-site Schiff-base intermediate with substrate is K50. A Mg(2+)-binding site is contributed by D183.

The protein belongs to the HAD-like hydrolase superfamily. PhnX family. In terms of assembly, homodimer. It depends on Mg(2+) as a cofactor.

It carries out the reaction phosphonoacetaldehyde + H2O = acetaldehyde + phosphate + H(+). Its function is as follows. Involved in phosphonate degradation. In Bacillus cereus (strain AH820), this protein is Phosphonoacetaldehyde hydrolase.